The chain runs to 124 residues: Trophoblast-specific protein alpha (124 aa).

The N-terminal stretch at 1 to 18 (MTPTIFLVILCLGVASAV) is a signal peptide. 2 disordered regions span residues 51–74 (KLHS…SGQL) and 91–124 (FEEE…NQPQ). The segment covering 62–74 (EGSNIEMSASGQL) has biased composition (polar residues). Positions 103 to 112 (DDPEFEDYTE) are enriched in acidic residues.

Its subcellular location is the secreted. It localises to the extracellular space. In terms of biological role, it may be a growth factor/hormone, perhaps involved in interaction between the maternal and fetal systems in maintenance of pregnancy. In Mus musculus (Mouse), this protein is Trophoblast-specific protein alpha (Tpbpa).